The primary structure comprises 426 residues: UDP-N-acetylglucosamine 1-carboxyvinyltransferase (426 aa).

22–23 is a binding site for phosphoenolpyruvate; the sequence is KN. Arg-93 is a binding site for UDP-N-acetyl-alpha-D-glucosamine. Residue Asp-117 is the Proton donor of the active site. Residues Asp-312 and Met-334 each coordinate UDP-N-acetyl-alpha-D-glucosamine.

It belongs to the EPSP synthase family. MurA subfamily.

The protein resides in the cytoplasm. The enzyme catalyses phosphoenolpyruvate + UDP-N-acetyl-alpha-D-glucosamine = UDP-N-acetyl-3-O-(1-carboxyvinyl)-alpha-D-glucosamine + phosphate. The protein operates within cell wall biogenesis; peptidoglycan biosynthesis. In terms of biological role, cell wall formation. Adds enolpyruvyl to UDP-N-acetylglucosamine. In Treponema denticola (strain ATCC 35405 / DSM 14222 / CIP 103919 / JCM 8153 / KCTC 15104), this protein is UDP-N-acetylglucosamine 1-carboxyvinyltransferase.